Reading from the N-terminus, the 362-residue chain is Phosphoserine aminotransferase (362 aa).

Residues Ser-9 and Arg-42 each coordinate L-glutamate. Pyridoxal 5'-phosphate is bound by residues 76–77 (GR), Trp-102, Thr-153, Asp-174, and Gln-197. The residue at position 198 (Lys-198) is an N6-(pyridoxal phosphate)lysine. 239-240 (NT) provides a ligand contact to pyridoxal 5'-phosphate.

Belongs to the class-V pyridoxal-phosphate-dependent aminotransferase family. SerC subfamily. In terms of assembly, homodimer. Requires pyridoxal 5'-phosphate as cofactor.

The protein localises to the cytoplasm. It catalyses the reaction O-phospho-L-serine + 2-oxoglutarate = 3-phosphooxypyruvate + L-glutamate. It carries out the reaction 4-(phosphooxy)-L-threonine + 2-oxoglutarate = (R)-3-hydroxy-2-oxo-4-phosphooxybutanoate + L-glutamate. The protein operates within amino-acid biosynthesis; L-serine biosynthesis; L-serine from 3-phospho-D-glycerate: step 2/3. It functions in the pathway cofactor biosynthesis; pyridoxine 5'-phosphate biosynthesis; pyridoxine 5'-phosphate from D-erythrose 4-phosphate: step 3/5. Its function is as follows. Catalyzes the reversible conversion of 3-phosphohydroxypyruvate to phosphoserine and of 3-hydroxy-2-oxo-4-phosphonooxybutanoate to phosphohydroxythreonine. The chain is Phosphoserine aminotransferase from Escherichia coli O7:K1 (strain IAI39 / ExPEC).